The chain runs to 330 residues: Glycerol-3-phosphate dehydrogenase [NAD(P)+] (330 aa).

NADPH contacts are provided by Ser10, Trp11, Arg31, and Lys105. Residues Lys105, Gly135, and Ser137 each contribute to the sn-glycerol 3-phosphate site. Ala139 lines the NADPH pocket. Residues Lys190, Asp243, Ser253, Arg254, and Asn255 each coordinate sn-glycerol 3-phosphate. Lys190 functions as the Proton acceptor in the catalytic mechanism. Arg254 contacts NADPH. Val278 and Glu280 together coordinate NADPH.

It belongs to the NAD-dependent glycerol-3-phosphate dehydrogenase family.

Its subcellular location is the cytoplasm. The catalysed reaction is sn-glycerol 3-phosphate + NAD(+) = dihydroxyacetone phosphate + NADH + H(+). The enzyme catalyses sn-glycerol 3-phosphate + NADP(+) = dihydroxyacetone phosphate + NADPH + H(+). It functions in the pathway membrane lipid metabolism; glycerophospholipid metabolism. Its function is as follows. Catalyzes the reduction of the glycolytic intermediate dihydroxyacetone phosphate (DHAP) to sn-glycerol 3-phosphate (G3P), the key precursor for phospholipid synthesis. The chain is Glycerol-3-phosphate dehydrogenase [NAD(P)+] from Oleidesulfovibrio alaskensis (strain ATCC BAA-1058 / DSM 17464 / G20) (Desulfovibrio alaskensis).